The following is a 33-amino-acid chain: Protamine-M6/M7 (33 aa).

The interval Pro1 to Arg33 is disordered.

As to expression, testis.

It localises to the nucleus. The protein localises to the chromosome. Functionally, protamines substitute for histones in the chromatin of sperm during the haploid phase of spermatogenesis. They compact sperm DNA into a highly condensed, stable and inactive complex. The protein is Protamine-M6/M7 of Mugil cephalus (Flathead mullet).